A 607-amino-acid chain; its full sequence is Dolichyl-diphosphooligosaccharide--protein glycosyltransferase subunit 1 (607 aa).

An N-terminal signal peptide occupies residues 1 to 23 (MEAPVARLFLLLLLGSWTPAPGS). Residues 24-434 (ASSEAPPLIN…VVHYTFNKVL (411 aa)) are Lumenal-facing. Lys-187 carries the N6-acetyllysine modification. A glycan (N-linked (GlcNAc...) asparagine) is linked at Asn-299. A helical transmembrane segment spans residues 435-455 (MLQEPLLVVAAFYILFFTVII). Topologically, residues 456–607 (YVRLDFSITK…TKIDHILDAL (152 aa)) are cytoplasmic. Position 538 is an N6-acetyllysine; alternate (Lys-538). Lys-538 is covalently cross-linked (Glycyl lysine isopeptide (Lys-Gly) (interchain with G-Cter in SUMO2); alternate).

Belongs to the OST1 family. As to quaternary structure, component of the oligosaccharyltransferase (OST) complex. OST exists in two different complex forms which contain common core subunits RPN1, RPN2, OST48, OST4, DAD1 and TMEM258, either STT3A or STT3B as catalytic subunits, and form-specific accessory subunits. STT3A complex assembly occurs through the formation of 3 subcomplexes. Subcomplex 1 contains RPN1 and TMEM258, subcomplex 2 contains the STT3A-specific subunits STT3A, DC2/OSTC, and KCP2 as well as the core subunit OST4, and subcomplex 3 contains RPN2, DAD1, and OST48. The STT3A complex can form stable complexes with the Sec61 complex or with both the Sec61 and TRAP complexes. Interacts with TMEM35A/NACHO. In terms of processing, ubiquitinated by the ECS(ASB11) complex. Ufmylated by UFL1 in response to endoplasmic reticulum stress, promoting reticulophagy of endoplasmic reticulum sheets.

Its subcellular location is the endoplasmic reticulum membrane. The protein operates within protein modification; protein glycosylation. Its function is as follows. Subunit of the oligosaccharyl transferase (OST) complex that catalyzes the initial transfer of a defined glycan (Glc(3)Man(9)GlcNAc(2) in eukaryotes) from the lipid carrier dolichol-pyrophosphate to an asparagine residue within an Asn-X-Ser/Thr consensus motif in nascent polypeptide chains, the first step in protein N-glycosylation. N-glycosylation occurs cotranslationally and the complex associates with the Sec61 complex at the channel-forming translocon complex that mediates protein translocation across the endoplasmic reticulum (ER). All subunits are required for a maximal enzyme activity. In Macaca fascicularis (Crab-eating macaque), this protein is Dolichyl-diphosphooligosaccharide--protein glycosyltransferase subunit 1.